The following is a 299-amino-acid chain: ATP phosphoribosyltransferase (299 aa).

This sequence belongs to the ATP phosphoribosyltransferase family. Long subfamily. As to quaternary structure, equilibrium between an active dimeric form, an inactive hexameric form and higher aggregates. Interconversion between the various forms is largely reversible and is influenced by the natural substrates and inhibitors of the enzyme. It depends on Mg(2+) as a cofactor.

Its subcellular location is the cytoplasm. The catalysed reaction is 1-(5-phospho-beta-D-ribosyl)-ATP + diphosphate = 5-phospho-alpha-D-ribose 1-diphosphate + ATP. It participates in amino-acid biosynthesis; L-histidine biosynthesis; L-histidine from 5-phospho-alpha-D-ribose 1-diphosphate: step 1/9. Feedback inhibited by histidine. Functionally, catalyzes the condensation of ATP and 5-phosphoribose 1-diphosphate to form N'-(5'-phosphoribosyl)-ATP (PR-ATP). Has a crucial role in the pathway because the rate of histidine biosynthesis seems to be controlled primarily by regulation of HisG enzymatic activity. In Shigella flexneri serotype 5b (strain 8401), this protein is ATP phosphoribosyltransferase.